A 736-amino-acid chain; its full sequence is Transcription factor E2F8 (736 aa).

The tract at residues 1 to 26 (MEEGSKENCGFNGSPMGSRSPPKQLT) is disordered. Over residues 15–26 (PMGSRSPPKQLT) the composition is skewed to polar residues. DNA-binding regions lie at residues 98 to 167 (RKEK…IWHG) and 240 to 326 (RKEK…QWTC). Disordered stretches follow at residues 386–405 (RRKINSAPSSPIKSGDGSSS), 435–456 (SACKAKSTVKQPGGSDKNQTPT), 483–551 (EQTL…AVDD), and 716–736 (PGGMGCSPPESARKLDVGTDD). Residues 393–405 (PSSPIKSGDGSSS) are compositionally biased toward low complexity. Composition is skewed to basic and acidic residues over residues 509–539 (GRHEGDGTSHSEDHSAQERHPKRLPESDRGC) and 726–736 (SARKLDVGTDD).

The protein belongs to the E2F/DP family. As to quaternary structure, homodimer and heterodimer: mainly forms homodimers and, to a lesser extent, heterodimers with e2f7.

The protein resides in the nucleus. Its function is as follows. Atypical E2F transcription factor that participates in various processes such as angiogenesis and polyploidization of specialized cells. Mainly acts as a transcription repressor that binds DNA independently of DP proteins and specifically recognizes the E2 recognition site 5'-TTTC[CG]CGC-3'. Directly represses transcription of classical E2F transcription factors such as e2f1. Acts as a regulator of S-phase by recognizing and binding the E2-related site 5'-TTCCCGCC-3' and mediating repression of G1/S-regulated genes. Acts as a promoter of sprouting angiogenesis, possibly by acting as a transcription activator. This is Transcription factor E2F8 (e2f8) from Xenopus tropicalis (Western clawed frog).